A 176-amino-acid chain; its full sequence is Ribosome rescue factor SmrB (176 aa).

Positions 98 to 173 (LDLHGLTQMQ…GTAAILLLVE (76 aa)) constitute a Smr domain.

It belongs to the SmrB family. Associates with collided ribosomes, but not with correctly translating polysomes.

Functionally, acts as a ribosome collision sensor. Detects stalled/collided disomes (pairs of ribosomes where the leading ribosome is stalled and a second ribosome has collided with it) and endonucleolytically cleaves mRNA at the 5' boundary of the stalled ribosome. Stalled/collided disomes form a new interface (primarily via the 30S subunits) that binds SmrB. Cleaved mRNA becomes available for tmRNA ligation, leading to ribosomal subunit dissociation and rescue of stalled ribosomes. The polypeptide is Ribosome rescue factor SmrB (Serratia proteamaculans (strain 568)).